The following is a 118-amino-acid chain: Evasin P546 (118 aa).

The first 21 residues, 1-21 (MKVLLYIAASCLMLLALNVSA), serve as a signal peptide directing secretion. 4 cysteine pairs are disulfide-bonded: C38/C59, C55/C96, C72/C101, and C91/C110. N-linked (GlcNAc...) asparagine glycosylation occurs at N45.

Its subcellular location is the secreted. In terms of biological role, salivary chemokine-binding protein which binds to host chemokines CCL1, CCL3, CCL5 and CCL22. This Amblyomma cajennense (Cayenne tick) protein is Evasin P546.